Reading from the N-terminus, the 608-residue chain is UvrABC system protein C (608 aa).

Positions 13–91 (HDPGVYRMFD…IKTFQPRYNV (79 aa)) constitute a GIY-YIG domain. A UVR domain is found at 201 to 236 (QQVLDHLIGKMERASRALNFEEAARYRDQIQAVRSV).

Belongs to the UvrC family. In terms of assembly, interacts with UvrB in an incision complex.

Its subcellular location is the cytoplasm. In terms of biological role, the UvrABC repair system catalyzes the recognition and processing of DNA lesions. UvrC both incises the 5' and 3' sides of the lesion. The N-terminal half is responsible for the 3' incision and the C-terminal half is responsible for the 5' incision. This is UvrABC system protein C from Mannheimia succiniciproducens (strain KCTC 0769BP / MBEL55E).